Consider the following 2883-residue polypeptide: Bifunctional DNA-directed RNA polymerase subunit beta-beta' (2883 aa).

Residues 1–1377 are DNA-directed RNA polymerase subunit beta; that stretch reads MPTTLKSGNR…DVTVYGETEE (1377 aa). The DNA-directed RNA polymerase subunit beta' stretch occupies residues 1382–2883; that stretch reads PMPIKEDDRP…IRIKEKTEGA (1502 aa). 4 residues coordinate Zn(2+): Cys-1447, Cys-1449, Cys-1462, and Cys-1465. Residues Asp-1846, Asp-1848, and Asp-1850 each coordinate Mg(2+). Zn(2+) contacts are provided by Cys-2176, Cys-2250, Cys-2257, and Cys-2260.

This sequence in the N-terminal section; belongs to the RNA polymerase beta chain family. It in the C-terminal section; belongs to the RNA polymerase beta' chain family. The RNAP catalytic core consists of 2 alpha, 1 beta/beta' and 1 omega subunit. When a sigma factor is associated with the core the holoenzyme is formed, which can initiate transcription. It depends on Mg(2+) as a cofactor. Zn(2+) serves as cofactor.

The enzyme catalyses RNA(n) + a ribonucleoside 5'-triphosphate = RNA(n+1) + diphosphate. Its function is as follows. DNA-dependent RNA polymerase catalyzes the transcription of DNA into RNA using the four ribonucleoside triphosphates as substrates. The polypeptide is Bifunctional DNA-directed RNA polymerase subunit beta-beta' (rpoBC) (Wolinella succinogenes (strain ATCC 29543 / DSM 1740 / CCUG 13145 / JCM 31913 / LMG 7466 / NCTC 11488 / FDC 602W) (Vibrio succinogenes)).